The chain runs to 460 residues: Methylenetetrahydrofolate--tRNA-(uracil-5-)-methyltransferase TrmFO (460 aa).

15–20 lines the FAD pocket; that stretch reads GAGLAG.

Belongs to the MnmG family. TrmFO subfamily. FAD serves as cofactor.

It is found in the cytoplasm. It carries out the reaction uridine(54) in tRNA + (6R)-5,10-methylene-5,6,7,8-tetrahydrofolate + NADH + H(+) = 5-methyluridine(54) in tRNA + (6S)-5,6,7,8-tetrahydrofolate + NAD(+). It catalyses the reaction uridine(54) in tRNA + (6R)-5,10-methylene-5,6,7,8-tetrahydrofolate + NADPH + H(+) = 5-methyluridine(54) in tRNA + (6S)-5,6,7,8-tetrahydrofolate + NADP(+). In terms of biological role, catalyzes the folate-dependent formation of 5-methyl-uridine at position 54 (M-5-U54) in all tRNAs. The polypeptide is Methylenetetrahydrofolate--tRNA-(uracil-5-)-methyltransferase TrmFO (Synechococcus sp. (strain CC9902)).